We begin with the raw amino-acid sequence, 589 residues long: Serine/threonine-protein phosphatase 2A 65 kDa regulatory subunit A alpha isoform (589 aa).

The residue at position 2 (A2) is an N-acetylalanine. HEAT repeat units follow at residues 8–46 (DSLY…GVER), 47–84 (TRSE…GGPE), 85–123 (YVHC…SPSD), 124–161 (LEAH…VSSA), 162–200 (VKAE…ELDN), 201–239 (VKSE…PQED), 240–278 (LEAL…GPEI), 279–321 (TKTD…RENV), 322–360 (IMTQ…GKDS), 361–399 (TIEH…GIRQ), 400–438 (LSQS…GVEF), 439–477 (FDEK…GKEW), 478–516 (AHAT…GQDI), 517–555 (TTKH…DNST), and 556–589 (LQSE…LSLA). A PP2A subunit B binding region spans residues 8–399 (DSLYPIAVLI…CVNEVIGIRQ (392 aa)). Residues 47–321 (TRSELLPFLT…NLSADCRENV (275 aa)) are polyoma small and medium T antigens Binding. Residues 85-239 (YVHCLLPPLE…NIAQLLPQED (155 aa)) are SV40 small T antigen binding. N6-acetyllysine is present on K280. The segment at 400–589 (LSQSLLPAIV…QEALTVLSLA (190 aa)) is PP2A subunit C binding.

It belongs to the phosphatase 2A regulatory subunit A family. PP2A consists of a common heterodimeric core enzyme, composed of PPP2CA a 36 kDa catalytic subunit (subunit C) and PPP2R1A a 65 kDa constant regulatory subunit (PR65 or subunit A), that associates with a variety of regulatory subunits. Proteins that associate with the core dimer include three families of regulatory subunits B (the R2/B/PR55/B55, R3/B''/PR72/PR130/PR59 and R5/B'/B56 families), the 48 kDa variable regulatory subunit, viral proteins, and cell signaling molecules. Found in a complex with at least ARL2, PPP2CB, PPP2R1A, PPP2R2A, PPP2R5E and TBCD. Interacts with the PP2A C catalytic subunit PPP2CA. Interacts with the PP2A B subunit PPP2R2A. Interacts with the PP2A B subunit PPP2R5D. Interacts with FOXO1; the interaction dephosphorylates FOXO1 on AKT-mediated phosphorylation sites. Interacts with IPO9. Interacts with TP53 and SGO1. Interacts with PLA2G16; this interaction might decrease PP2A activity. Interacts with CTTNBP2NL. Interacts with GNA12; the interaction promotes protein phosphatase 2A activation causing dephosphorylation of MAPT. Interacts with CIP2A; this interaction stabilizes CIP2A. Interacts with PABIR1/FAM122A. Interacts with ADCY8; antagonizes interaction between ADCY8 and calmodulin. Interacts with CRTC3 (when phosphorylated at 'Ser-391'). Interacts with SPRY2. Part of the core of STRIPAK complexes composed of PP2A catalytic and scaffolding subunits, the striatins (PP2A regulatory subunits), the striatin-associated proteins MOB4, STRIP1 and STRIP2, PDCD10 and members of the STE20 kinases, such as STK24 and STK26. Component of the Integrator-PP2A (INTAC) complex, composed of the Integrator core complex and protein phosphatase 2A subunits PPP2CA and PPP2R1A.

It localises to the cytoplasm. Its subcellular location is the nucleus. The protein resides in the chromosome. It is found in the centromere. The protein localises to the lateral cell membrane. It localises to the cell projection. Its subcellular location is the dendrite. The PR65 subunit of protein phosphatase 2A serves as a scaffolding molecule to coordinate the assembly of the catalytic subunit and a variable regulatory B subunit. Upon interaction with GNA12 promotes dephosphorylation of microtubule associated protein TAU/MAPT. Required for proper chromosome segregation and for centromeric localization of SGO1 in mitosis. Together with RACK1 adapter, mediates dephosphorylation of AKT1 at 'Ser-473', preventing AKT1 activation and AKT-mTOR signaling pathway. Dephosphorylation of AKT1 is essential for regulatory T-cells (Treg) homeostasis and stability. Part of the striatin-interacting phosphatase and kinase (STRIPAK) complexes. STRIPAK complexes have critical roles in protein (de)phosphorylation and are regulators of multiple signaling pathways including Hippo, MAPK, nuclear receptor and cytoskeleton remodeling. Different types of STRIPAK complexes are involved in a variety of biological processes such as cell growth, differentiation, apoptosis, metabolism and immune regulation. Key mediator of a quality checkpoint during transcription elongation as part of the Integrator-PP2A (INTAC) complex. The INTAC complex drives premature transcription termination of transcripts that are unfavorably configured for transcriptional elongation: within the INTAC complex, acts as a scaffolding subunit for PPP2CA, which catalyzes dephosphorylation of the C-terminal domain (CTD) of Pol II subunit POLR2A/RPB1 and SUPT5H/SPT5, thereby preventing transcriptional elongation. Regulates the recruitment of the SKA complex to kinetochores. In Bos taurus (Bovine), this protein is Serine/threonine-protein phosphatase 2A 65 kDa regulatory subunit A alpha isoform (PPP2R1A).